A 184-amino-acid chain; its full sequence is MALLPILSYPDPRLRMIATPVKEVTAEIKTLITDMIETMYDAEGIGLAASQVDHHIQLIVMDLSEDKDSPRVFINPKVTPLVEEKQPYEEGCLSVPDVYDKVERPNKVRIEAIDQNGNAIDEEVEGLLAVCIQHEIDHLNGVIFVDYLSRLKQTRARDKVRKVLKIREKQGEQVAEKEPQPANS.

Fe cation-binding residues include cysteine 92 and histidine 134. Residue glutamate 135 is part of the active site. Fe cation is bound at residue histidine 138.

It belongs to the polypeptide deformylase family. Fe(2+) is required as a cofactor.

It carries out the reaction N-terminal N-formyl-L-methionyl-[peptide] + H2O = N-terminal L-methionyl-[peptide] + formate. Its function is as follows. Removes the formyl group from the N-terminal Met of newly synthesized proteins. Requires at least a dipeptide for an efficient rate of reaction. N-terminal L-methionine is a prerequisite for activity but the enzyme has broad specificity at other positions. This chain is Peptide deformylase, found in Psychrobacter arcticus (strain DSM 17307 / VKM B-2377 / 273-4).